A 212-amino-acid polypeptide reads, in one-letter code: Uridine kinase (212 aa).

12–19 serves as a coordination point for ATP; it reads GGSGGGKT.

This sequence belongs to the uridine kinase family.

Its subcellular location is the cytoplasm. It carries out the reaction uridine + ATP = UMP + ADP + H(+). The enzyme catalyses cytidine + ATP = CMP + ADP + H(+). The protein operates within pyrimidine metabolism; CTP biosynthesis via salvage pathway; CTP from cytidine: step 1/3. It functions in the pathway pyrimidine metabolism; UMP biosynthesis via salvage pathway; UMP from uridine: step 1/1. The chain is Uridine kinase from Streptococcus pneumoniae serotype 2 (strain D39 / NCTC 7466).